Reading from the N-terminus, the 238-residue chain is Large ribosomal subunit protein uL2 (238 aa).

The interval 198 to 238 (NHPHGGGSHQSPSFPTTVSRNAPPGRKVGHIAARSTGRRKR) is disordered. The span at 206–217 (HQSPSFPTTVSR) shows a compositional bias: polar residues.

It belongs to the universal ribosomal protein uL2 family. In terms of assembly, part of the 50S ribosomal subunit. Forms a bridge to the 30S subunit in the 70S ribosome.

In terms of biological role, one of the primary rRNA binding proteins. Required for association of the 30S and 50S subunits to form the 70S ribosome, for tRNA binding and peptide bond formation. It has been suggested to have peptidyltransferase activity; this is somewhat controversial. Makes several contacts with the 16S rRNA in the 70S ribosome. In Hyperthermus butylicus (strain DSM 5456 / JCM 9403 / PLM1-5), this protein is Large ribosomal subunit protein uL2.